We begin with the raw amino-acid sequence, 196 residues long: Peptidyl-tRNA hydrolase (196 aa).

Tyr-17 serves as a coordination point for tRNA. His-22 (proton acceptor) is an active-site residue. TRNA is bound by residues Phe-68, Asn-70, and Asn-116.

The protein belongs to the PTH family. As to quaternary structure, monomer.

It localises to the cytoplasm. The catalysed reaction is an N-acyl-L-alpha-aminoacyl-tRNA + H2O = an N-acyl-L-amino acid + a tRNA + H(+). Functionally, hydrolyzes ribosome-free peptidyl-tRNAs (with 1 or more amino acids incorporated), which drop off the ribosome during protein synthesis, or as a result of ribosome stalling. Its function is as follows. Catalyzes the release of premature peptidyl moieties from peptidyl-tRNA molecules trapped in stalled 50S ribosomal subunits, and thus maintains levels of free tRNAs and 50S ribosomes. The protein is Peptidyl-tRNA hydrolase of Photorhabdus laumondii subsp. laumondii (strain DSM 15139 / CIP 105565 / TT01) (Photorhabdus luminescens subsp. laumondii).